A 315-amino-acid polypeptide reads, in one-letter code: Methionyl-tRNA formyltransferase (315 aa).

114 to 117 (SLLP) contacts (6S)-5,6,7,8-tetrahydrofolate.

The protein belongs to the Fmt family.

It catalyses the reaction L-methionyl-tRNA(fMet) + (6R)-10-formyltetrahydrofolate = N-formyl-L-methionyl-tRNA(fMet) + (6S)-5,6,7,8-tetrahydrofolate + H(+). Functionally, attaches a formyl group to the free amino group of methionyl-tRNA(fMet). The formyl group appears to play a dual role in the initiator identity of N-formylmethionyl-tRNA by promoting its recognition by IF2 and preventing the misappropriation of this tRNA by the elongation apparatus. The chain is Methionyl-tRNA formyltransferase from Corynebacterium efficiens (strain DSM 44549 / YS-314 / AJ 12310 / JCM 11189 / NBRC 100395).